Consider the following 424-residue polypeptide: SWI/SNF and RSC complexes subunit arp42 (424 aa).

Belongs to the actin family. Component of the RSC complex composed of at least arp9, arp42, rsc1, rsc4, rsc7, rsc9, rsc58, sfh1, snf21, ssr1, ssr2, ssr3 and ssr4. The complex interacts with histone and histone variant components of centromeric chromatin. Component of the SWI/SNF global transcription activator complex composed of at least arp9, arp42, snf5, snf22, snf30, sbf59, sol1, ssr1, ssr2, ssr3, ssr4 and tfg3.

Its subcellular location is the cytoplasm. The protein localises to the nucleus. Its function is as follows. Component of the chromatin structure remodeling complex (RSC), which is involved in transcription regulation and nucleosome positioning. Controls particularly membrane and organelle development genes. Part of the SWI/SNF complex, an ATP-dependent chromatin remodeling complex, required for the positive and negative regulation of gene expression of a large number of genes. It changes chromatin structure by altering DNA-histone contacts within a nucleosome, leading eventually to a change in nucleosome position, thus facilitating or repressing binding of gene-specific transcription factors. In Schizosaccharomyces pombe (strain 972 / ATCC 24843) (Fission yeast), this protein is SWI/SNF and RSC complexes subunit arp42 (arp42).